The sequence spans 173 residues: Large ribosomal subunit protein uL10 (173 aa).

The protein belongs to the universal ribosomal protein uL10 family. In terms of assembly, part of the ribosomal stalk of the 50S ribosomal subunit. The N-terminus interacts with L11 and the large rRNA to form the base of the stalk. The C-terminus forms an elongated spine to which L12 dimers bind in a sequential fashion forming a multimeric L10(L12)X complex.

In terms of biological role, forms part of the ribosomal stalk, playing a central role in the interaction of the ribosome with GTP-bound translation factors. The sequence is that of Large ribosomal subunit protein uL10 from Bifidobacterium animalis subsp. lactis (strain AD011).